Here is a 650-residue protein sequence, read N- to C-terminus: Probable Xaa-Pro aminopeptidase P (650 aa).

Aspartate 447, aspartate 458, glutamate 556, and glutamate 570 together coordinate Mn(2+).

Belongs to the peptidase M24B family. It depends on Mn(2+) as a cofactor.

The catalysed reaction is Release of any N-terminal amino acid, including proline, that is linked to proline, even from a dipeptide or tripeptide.. Its function is as follows. Catalyzes the removal of a penultimate prolyl residue from the N-termini of peptides. The protein is Probable Xaa-Pro aminopeptidase P (AMPP) of Phaeosphaeria nodorum (strain SN15 / ATCC MYA-4574 / FGSC 10173) (Glume blotch fungus).